Reading from the N-terminus, the 273-residue chain is 2,3,4,5-tetrahydropyridine-2,6-dicarboxylate N-succinyltransferase (273 aa).

2 residues coordinate substrate: Arg104 and Asp141.

This sequence belongs to the transferase hexapeptide repeat family. As to quaternary structure, homotrimer.

Its subcellular location is the cytoplasm. The enzyme catalyses (S)-2,3,4,5-tetrahydrodipicolinate + succinyl-CoA + H2O = (S)-2-succinylamino-6-oxoheptanedioate + CoA. The protein operates within amino-acid biosynthesis; L-lysine biosynthesis via DAP pathway; LL-2,6-diaminopimelate from (S)-tetrahydrodipicolinate (succinylase route): step 1/3. The sequence is that of 2,3,4,5-tetrahydropyridine-2,6-dicarboxylate N-succinyltransferase from Neisseria meningitidis serogroup B (strain ATCC BAA-335 / MC58).